A 241-amino-acid chain; its full sequence is Small ribosomal subunit protein uS3 (241 aa).

Positions 39-107 (IRKYLEKELK…ETHLNIVEVR (69 aa)) constitute a KH type-2 domain. The segment at 214-241 (ASERRATEGDAAHGGGGDRERGRRRENA) is disordered.

Belongs to the universal ribosomal protein uS3 family. In terms of assembly, part of the 30S ribosomal subunit. Forms a tight complex with proteins S10 and S14.

Its function is as follows. Binds the lower part of the 30S subunit head. Binds mRNA in the 70S ribosome, positioning it for translation. In Mesorhizobium japonicum (strain LMG 29417 / CECT 9101 / MAFF 303099) (Mesorhizobium loti (strain MAFF 303099)), this protein is Small ribosomal subunit protein uS3.